Consider the following 99-residue polypeptide: Aspartyl/glutamyl-tRNA(Asn/Gln) amidotransferase subunit C (99 aa).

It belongs to the GatC family. Heterotrimer of A, B and C subunits.

The enzyme catalyses L-glutamyl-tRNA(Gln) + L-glutamine + ATP + H2O = L-glutaminyl-tRNA(Gln) + L-glutamate + ADP + phosphate + H(+). The catalysed reaction is L-aspartyl-tRNA(Asn) + L-glutamine + ATP + H2O = L-asparaginyl-tRNA(Asn) + L-glutamate + ADP + phosphate + 2 H(+). Its function is as follows. Allows the formation of correctly charged Asn-tRNA(Asn) or Gln-tRNA(Gln) through the transamidation of misacylated Asp-tRNA(Asn) or Glu-tRNA(Gln) in organisms which lack either or both of asparaginyl-tRNA or glutaminyl-tRNA synthetases. The reaction takes place in the presence of glutamine and ATP through an activated phospho-Asp-tRNA(Asn) or phospho-Glu-tRNA(Gln). The protein is Aspartyl/glutamyl-tRNA(Asn/Gln) amidotransferase subunit C of Burkholderia ambifaria (strain MC40-6).